The primary structure comprises 1070 residues: DNA-directed RNA polymerase subunit beta (1070 aa).

The protein belongs to the RNA polymerase beta chain family. In plastids the minimal PEP RNA polymerase catalytic core is composed of four subunits: alpha, beta, beta', and beta''. When a (nuclear-encoded) sigma factor is associated with the core the holoenzyme is formed, which can initiate transcription.

Its subcellular location is the plastid. The protein localises to the chloroplast. The catalysed reaction is RNA(n) + a ribonucleoside 5'-triphosphate = RNA(n+1) + diphosphate. Its function is as follows. DNA-dependent RNA polymerase catalyzes the transcription of DNA into RNA using the four ribonucleoside triphosphates as substrates. The protein is DNA-directed RNA polymerase subunit beta of Morus indica (Mulberry).